A 179-amino-acid chain; its full sequence is NADH:FAD oxidoreductase (179 aa).

48–51 is a binding site for FAD; the sequence is TCSA. 54 to 57 serves as a coordination point for NAD(+); it reads SVCD. FAD is bound by residues 65-71, Ala99, 104-109, and Ser144; these read CINRKSY and VPMEER. NAD(+) is bound by residues His145 and 166–169; that span reads YHRR. Residue Tyr166 coordinates FAD.

Belongs to the non-flavoprotein flavin reductase family. Homodimer. The chlorophenol-4-monooxygenase is composed of an oxygenase component TftD and a reductase component TftC.

It catalyses the reaction FADH2 + NAD(+) = FAD + NADH + 2 H(+). It functions in the pathway xenobiotic degradation. Its function is as follows. Reductase component of a two-component system that degrades 2,4,5-trichlorophenol. TftC provides the FADH(2) required by TftD. TftD oxidizes 2,4,5-trichlorophenol (2,4,5-TCP) to 2,5-dichloro-p-benzoquinone, which is chemically reduced to 2,5-dichloro-p-hydroquinone (2,5-DiCHQ). Then, TftD oxidizes the latter to 5-chloro-2-hydroxy-p-benzoquinone. The sequence is that of NADH:FAD oxidoreductase (tftC) from Burkholderia cepacia (Pseudomonas cepacia).